We begin with the raw amino-acid sequence, 422 residues long: Tyrosine--tRNA ligase (422 aa).

Residue Tyr-37 participates in L-tyrosine binding. The 'HIGH' region signature appears at 42 to 51 (PTEESLHIGH). L-tyrosine contacts are provided by Tyr-175 and Gln-179. The 'KMSKS' region signature appears at 235–239 (KFGKT). Lys-238 is an ATP binding site. The S4 RNA-binding domain occupies 357-414 (KDLQEALVLTSLAQSRTQAKNMIISNSISINTEKIRKNHIFHEKDKLFGKFTLLSRGK).

Belongs to the class-I aminoacyl-tRNA synthetase family. TyrS type 1 subfamily. Homodimer.

Its subcellular location is the cytoplasm. The catalysed reaction is tRNA(Tyr) + L-tyrosine + ATP = L-tyrosyl-tRNA(Tyr) + AMP + diphosphate + H(+). Catalyzes the attachment of tyrosine to tRNA(Tyr) in a two-step reaction: tyrosine is first activated by ATP to form Tyr-AMP and then transferred to the acceptor end of tRNA(Tyr). The chain is Tyrosine--tRNA ligase from Buchnera aphidicola subsp. Acyrthosiphon pisum (strain APS) (Acyrthosiphon pisum symbiotic bacterium).